The chain runs to 103 residues: NADH-quinone oxidoreductase subunit K (103 aa).

A run of 3 helical transmembrane segments spans residues 1-21, 29-49, and 62-82; these read MIVPLSHVLAVAALLFAVGGV, ILLILIGVEFMLAAAGLAFAG, and AVIIIMGLASAEAGLGLALLV. A disordered region spans residues 84 to 103; that stretch reads GRRGGGTDRADSYDRLGEES. Residues 88–103 show a composition bias toward basic and acidic residues; that stretch reads GGTDRADSYDRLGEES.

It belongs to the complex I subunit 4L family. As to quaternary structure, NDH-1 is composed of 14 different subunits. Subunits NuoA, H, J, K, L, M, N constitute the membrane sector of the complex.

It localises to the cell inner membrane. It carries out the reaction a quinone + NADH + 5 H(+)(in) = a quinol + NAD(+) + 4 H(+)(out). In terms of biological role, NDH-1 shuttles electrons from NADH, via FMN and iron-sulfur (Fe-S) centers, to quinones in the respiratory chain. The immediate electron acceptor for the enzyme in this species is believed to be ubiquinone. Couples the redox reaction to proton translocation (for every two electrons transferred, four hydrogen ions are translocated across the cytoplasmic membrane), and thus conserves the redox energy in a proton gradient. This is NADH-quinone oxidoreductase subunit K from Solidesulfovibrio magneticus (strain ATCC 700980 / DSM 13731 / RS-1) (Desulfovibrio magneticus).